Consider the following 87-residue polypeptide: Putative regulatory protein ABC2323 (87 aa).

It belongs to the RemA family.

The chain is Putative regulatory protein ABC2323 from Shouchella clausii (strain KSM-K16) (Alkalihalobacillus clausii).